A 2008-amino-acid polypeptide reads, in one-letter code: Histone-lysine N-methyltransferase SETD1B (2008 aa).

Residues 1 to 20 (MSFREIKAGEKAKHPEDHGK) are compositionally biased toward basic and acidic residues. The interval 1–42 (MSFREIKAGEKAKHPEDHGKKQSSSWINGMENSTQASTSVEK) is disordered. The span at 22 to 39 (QSSSWINGMENSTQASTS) shows a compositional bias: polar residues. The 89-residue stretch at 111–199 (DEFYVGPVPP…NIIHVELDTK (89 aa)) folds into the RRM domain. Disordered stretches follow at residues 249–390 (NLSS…SSYK), 402–652 (FPQS…APIT), 682–725 (PPGF…PPLP), 950–1172 (RKEP…DKRE), 1309–1328 (TKLP…PGRE), 1345–1461 (VPSS…FTPT), 1563–1600 (VGAS…MYSG), 1674–1712 (KEEE…PQFR), and 1814–1842 (EEPP…RRSE). The span at 251–264 (SSVGSSVTPNSSTP) shows a compositional bias: low complexity. 5 stretches are compositionally biased toward polar residues: residues 265 to 293 (FSHD…QGTP), 301 to 315 (PFSQ…QTTP), 360 to 381 (HQFS…TPPL), 405 to 414 (SEEQPFAQTS), and 456 to 491 (DSNS…QHNS). A compositionally biased stretch (basic and acidic residues) spans 492 to 521 (LDSRIEMLLKEQRTKLPFLNEHDSDNEVRM). A compositionally biased stretch (low complexity) spans 524–537 (SPISSSSSQLSPIP). Polar residues-rich tracts occupy residues 540 to 560 (GSNS…SSTG) and 582 to 604 (ASLN…QLNR). Composition is skewed to basic and acidic residues over residues 606–617 (SKVETLEVKEMV) and 626–636 (EKMDESQHSSG). Positions 637-646 (EDMEISDDEM) are enriched in acidic residues. The segment covering 979–997 (ERDRDASDTTSDLSKKDAE) has biased composition (basic and acidic residues). Residues 1011–1020 (LDSEGEEGDE) show a composition bias toward acidic residues. The segment covering 1021 to 1031 (TSGKEEESSSE) has biased composition (basic and acidic residues). Composition is skewed to acidic residues over residues 1050 to 1094 (EEEE…EEDA) and 1105 to 1149 (ESSD…EDQD). Residues 1150-1172 (REAMVAETEHEPASHELPDDKRE) show a composition bias toward basic and acidic residues. The span at 1345–1356 (VPSSTVPLPSTP) shows a compositional bias: low complexity. Basic and acidic residues predominate over residues 1378 to 1392 (SIEEEIPRTPGRDIL). Over residues 1418–1427 (LTGSSLTLSS) the composition is skewed to low complexity. 2 stretches are compositionally biased toward basic residues: residues 1577 to 1587 (LPKRRPGRPRR) and 1681 to 1690 (KPKRQWRRQK). The segment covering 1699 to 1710 (IPSPEYSPPQPQ) has biased composition (pro residues). The short motif at 1840-1845 (RSEQRR) is the RxxxRR motif element. The SET domain occupies 1869-1986 (KKLKFCKSHI…VNEEITYDYK (118 aa)). Position 1985 (Tyr-1985) interacts with S-adenosyl-L-methionine. In terms of domain architecture, Post-SET spans 1992 to 2008 (VKIPCLCGSENCRGTLN).

The protein belongs to the class V-like SAM-binding methyltransferase superfamily. As to quaternary structure, component of the SET1B/COMPASS complex.

The protein resides in the nucleus speckle. The protein localises to the chromosome. The enzyme catalyses L-lysyl(4)-[histone H3] + 3 S-adenosyl-L-methionine = N(6),N(6),N(6)-trimethyl-L-lysyl(4)-[histone H3] + 3 S-adenosyl-L-homocysteine + 3 H(+). Its function is as follows. Histone methyltransferase that specifically methylates 'Lys-4' of histone H3, when part of the SET1 histone methyltransferase (HMT) complex, but not if the neighboring 'Lys-9' residue is already methylated. H3 'Lys-4' methylation represents a specific tag for epigenetic transcriptional activation. In Gallus gallus (Chicken), this protein is Histone-lysine N-methyltransferase SETD1B (SETD1B).